The sequence spans 154 residues: Large ribosomal subunit protein uL15 (154 aa).

The span at 1-13 (MKLNELRDHEGAT) shows a compositional bias: basic and acidic residues. A disordered region spans residues 1–44 (MKLNELRDHEGATKNRKRIGRGIGSGTGKTGGCGVKGQKSRSGV). The span at 21–35 (RGIGSGTGKTGGCGV) shows a compositional bias: gly residues.

It belongs to the universal ribosomal protein uL15 family. Part of the 50S ribosomal subunit.

Functionally, binds to the 23S rRNA. This is Large ribosomal subunit protein uL15 from Bartonella bacilliformis (strain ATCC 35685 / KC583 / Herrer 020/F12,63).